A 607-amino-acid polypeptide reads, in one-letter code: ATP-dependent DNA helicase II subunit 1 (607 aa).

The 212-residue stretch at 241-452 (MDLGNDVRIG…IETMQRILRG (212 aa)) folds into the Ku domain. An SAP domain is found at 570-604 (IKALKVSQLKDILRDRGLRVSGKKADLLDNLTNYV).

It belongs to the ku70 family. Heterodimer of pku70 and pku80.

The protein localises to the nucleus. It is found in the chromosome. Its subcellular location is the telomere. It catalyses the reaction ATP + H2O = ADP + phosphate + H(+). Functionally, single-stranded DNA-dependent ATP-dependent helicase. Involved in non-homologous end joining (NHEJ) DNA double strand break repair. DNA-binding is sequence-independent but has a high affinity to nicks in double-stranded DNA and to the ends of duplex DNA. Binds to naturally occurring chromosomal ends, and therefore provides chromosomal end protection. Required also for telomere recombination to repair telomeric ends in the absence of telomerase. ku70, of the ku70/ku80 heterodimer, binds to the stem loop of tlc1, the RNA component of telomerase. Required for mating-type switching. Involved in telomere maintenance. Interacts with telomeric repeats and subtelomeric sequences thereby controlling telomere length and protecting against subtelomeric rearrangement. Maintains telomeric chromatin, which is involved in silencing the expression of genes located at the telomere. This chain is ATP-dependent DNA helicase II subunit 1 (pku70), found in Schizosaccharomyces pombe (strain 972 / ATCC 24843) (Fission yeast).